The primary structure comprises 80 residues: D-alanyl carrier protein 1 (80 aa).

The region spanning 1 to 80 is the Carrier domain; it reads MTMDDTKATV…KIVAKVENLQ (80 aa). An O-(pantetheine 4'-phosphoryl)serine modification is found at serine 38.

It belongs to the DltC family. 4'-phosphopantetheine is transferred from CoA to a specific serine of apo-DCP.

The protein localises to the cytoplasm. Its pathway is cell wall biogenesis; lipoteichoic acid biosynthesis. Functionally, carrier protein involved in the D-alanylation of lipoteichoic acid (LTA). The loading of thioester-linked D-alanine onto DltC is catalyzed by D-alanine--D-alanyl carrier protein ligase DltA. The DltC-carried D-alanyl group is further transferred to cell membrane phosphatidylglycerol (PG) by forming an ester bond, probably catalyzed by DltD. D-alanylation of LTA plays an important role in modulating the properties of the cell wall in Gram-positive bacteria, influencing the net charge of the cell wall. The sequence is that of D-alanyl carrier protein 1 from Lactiplantibacillus plantarum (strain ATCC BAA-793 / NCIMB 8826 / WCFS1) (Lactobacillus plantarum).